A 132-amino-acid polypeptide reads, in one-letter code: T-cell receptor alpha chain V region CTL-F3 (132 aa).

The first 22 residues, 1-22 (MNMRPDTCSVLVLLLMLRRNNG), serve as a signal peptide directing secretion. Residues 23–114 (DSVTQTEGLV…DSALYYCALS (92 aa)) form a v segment region. Asparagine 43 carries N-linked (GlcNAc...) asparagine glycosylation. Residues cysteine 44 and cysteine 111 are joined by a disulfide bond. The interval 115–132 (NAGAKLTFGGGTRLTVRP) is j segment.

In Mus musculus (Mouse), this protein is T-cell receptor alpha chain V region CTL-F3.